The chain runs to 273 residues: Large ribosomal subunit protein uL2cz/uL2cy (273 aa).

2 disordered regions span residues 1-25 and 224-273; these read MAIH…VKSN and NPVD…RRRK.

Belongs to the universal ribosomal protein uL2 family. In terms of assembly, part of the 50S ribosomal subunit.

Its subcellular location is the plastid. The protein resides in the chloroplast. This is Large ribosomal subunit protein uL2cz/uL2cy (rpl2-A) from Phalaenopsis aphrodite subsp. formosana (Moth orchid).